An 809-amino-acid polypeptide reads, in one-letter code: Glycerol-3-phosphate acyltransferase (809 aa).

The short motif at 306–311 is the HXXXXD motif element; the sequence is HRSHMD.

The protein belongs to the GPAT/DAPAT family.

It localises to the cell inner membrane. The enzyme catalyses sn-glycerol 3-phosphate + an acyl-CoA = a 1-acyl-sn-glycero-3-phosphate + CoA. It participates in phospholipid metabolism; CDP-diacylglycerol biosynthesis; CDP-diacylglycerol from sn-glycerol 3-phosphate: step 1/3. The sequence is that of Glycerol-3-phosphate acyltransferase from Vibrio vulnificus (strain CMCP6).